The chain runs to 2535 residues: Piezo-type mechanosensitive ion channel component 1 (2535 aa).

3 helical membrane passes run 13–25 (LLLPCTLLAASLL), 29–44 (ALSLVYLLFLLLLPWL), and 59–81 (LLRALLCLSLLFLVAHVAFQICL). The N-linked (GlcNAc...) asparagine glycan is linked to asparagine 100. Transmembrane regions (helical) follow at residues 122–138 (VAPDLGVLVASSLCLGL), 193–212 (LLVTSGRMLVIVLLALAGIA), 215–234 (SAFSSVYLMVFLAICTWWSC), 246–266 (LCVMVSCFGAGHLVCLYCYQT), and 308–328 (WPIYVSPGILLLLYYTATSLL). Residues 346-357 (DEEHELELDQLE) are compositionally biased toward acidic residues. Residues 346–377 (DEEHELELDQLEPEPQARGTTQGATPTTTGPD) are disordered. A compositionally biased stretch (low complexity) spans 358 to 376 (PEPQARGTTQGATPTTTGP). An N-linked (GlcNAc...) asparagine glycan is attached at asparagine 380. Helical transmembrane passes span 416 to 436 (LILDQSYVCALIAMMVWSIMY), 439 to 454 (WLTFVLLLWACLIWTV), 460 to 482 (LAMLCSPCILLYGLTLCCLRYVW), 510 to 527 (CLDLGAMLLYLLTFWLLL), 572 to 592 (IYVKYWIYVCAGMFIVVSFAG), 594 to 614 (LVVYKIVYMFLFLLCLTLFQV), 625 to 646 (VFWWLVVAYTMLVLIAVYTFQF), and 677 to 693 (LFSSILIPGFFLLACIL). At serine 749 the chain carries Phosphoserine. 12 consecutive transmembrane segments (helical) span residues 803-814 (LVALYTVWVALK), 818-831 (VMNLLLVVLWAFAL), 846-860 (VWTCIIIVCKMLYQL), 913-940 (GYIQNHLQILLLLVFEAVVYRRQEHYRR), 981-996 (GLEICFLMAVNVIGQR), 999-1014 (FMVILHGCWLVAILTR), 1028-1043 (CLFLTLFLLYQYLLCL), 1083-1104 (TNLISDFLLLLCASQQWQVFSA), 1140-1166 (YLDMLKVAVFRYLFWLVLVVVFVTGAT), 1172-1190 (GLGYLLACFYLLLFGTTLL), 1204-1222 (LILYNVTVIISKNMLSLLS), and 1272-1288 (IWDSICFFFLLLQRRVF). The stretch at 1325–1356 (HRQTEERSLAQLKRQMKRIRAKQEKYRQSQAS) forms a coiled coil. 2 disordered regions span residues 1345–1383 (AKQEKYRQSQASRGQLQSTDPQEPGPDSPGGSSPPRTQW) and 1556–1597 (SGPV…NTRS). Residues 1352 to 1365 (QSQASRGQLQSTDP) show a composition bias toward polar residues. 2 positions are modified to phosphoserine: serine 1372 and serine 1377. Over residues 1579 to 1597 (SSMTDDTGSPLSTGYNTRS) the composition is skewed to polar residues. Residues serine 1614, serine 1618, and serine 1633 each carry the phosphoserine modification. Transmembrane regions (helical) follow at residues 1644–1687 (PELE…LNHM), 1692–1707 (AASLVLPVLVFLWAML), 1716–1734 (FWMTAIVFTEVMVVTKYLF), and 1767–1788 (DSYIKYDLVQLMALFFHRSQLL). 2 stretches are compositionally biased toward basic and acidic residues: residues 1801-1811 (PKDHCRSSEKD) and 1842-1867 (PKDHIQGKGSVRSKDEIQDPPEDLKP). Residues 1801 to 1911 (PKDHCRSSEK…GREAAGRKRL (111 aa)) form a disordered region. Residues 1868-1881 (QHRRHISIRFRRRK) are compositionally biased toward basic residues. Transmembrane regions (helical) follow at residues 1965–1984 (YALMFLADIVDIVVIIFGFW), 2005–2021 (PQAFLFMLLVQFGTMVI), 2036–2056 (AFQVVLVVAIHLWMFFILPAV), 2065–2080 (AVAQLWYFVKCIYFAL), and 2181–2201 (GLIILFLIAIIWFPLLFMSLI). Cysteine 2425 and cysteine 2429 are joined by a disulfide. The helical transmembrane segment at 2446 to 2466 (LGFLAGYGIVGLYVSIVLVVG) threads the bilayer.

It belongs to the PIEZO (TC 1.A.75) family. As to quaternary structure, homotrimer; the homotrimer forms a propeller-shaped Piezo channel with a cation-ion conducting pore. Heterotrimeric interaction may occur between PIEZO1 and PIEZO2. Interacts with PKD2. Interacts with STOM13. Interacts with TMC1, TMC2, PCDH15 and CIB2; the interaction may be part of the MET complex. Interacts with MDFIC (via C-terminus); the interaction prolongs Piezo channel inactivation. Interacts with MDFI (via C-terminus); the interaction prolongs Piezo channel inactivation. As to expression, moderate expression in lung and kidney. Very weak expression in heart, spleen and liver.

It localises to the endoplasmic reticulum membrane. Its subcellular location is the endoplasmic reticulum-Golgi intermediate compartment membrane. The protein localises to the cell membrane. The protein resides in the cell projection. It is found in the lamellipodium membrane. It carries out the reaction K(+)(in) = K(+)(out). The enzyme catalyses Na(+)(in) = Na(+)(out). It catalyses the reaction Ca(2+)(in) = Ca(2+)(out). The catalysed reaction is Mg(2+)(in) = Mg(2+)(out). Regulated by auxillary subunits MDFIC and MDFI. Down-regulated by phosphatidylserines exposed on the cell surface. Divalent ions decrease the single-channel permeability of K(+). Functionally, pore-forming subunit of the mechanosensitive non-specific cation Piezo channel required for rapidly adapting mechanically activated (MA) currents and has a key role in sensing touch and tactile pain. Piezo channels are homotrimeric three-blade propeller-shaped structures that utilize a cap-motion and plug-and-latch mechanism to gate their ion-conducting pathways. Generates currents characterized by a linear current-voltage relationship that are sensitive to ruthenium red and gadolinium. Conductance to monovalent alkali ions is highest for K(+), intermediate for Na(+) and lowest for Li(+). Divalent ions except for Mn(2+) permeate the channel but more slowly than the monovalent ions and they also reduce K(+) currents. Plays a key role in epithelial cell adhesion by maintaining integrin activation through R-Ras recruitment to the ER, most probably in its activated state, and subsequent stimulation of calpain signaling. In inner ear hair cells, PIEZO1/2 subunits may constitute part of the mechanotransducer (MET) non-selective cation channel complex where they may act as pore-forming ion-conducting component in the complex. In the kidney, may contribute to the detection of intraluminal pressure changes and to urine flow sensing. Acts as a shear-stress sensor that promotes endothelial cell organization and alignment in the direction of blood flow through calpain activation. Plays a key role in blood vessel formation and vascular structure in both development and adult physiology. Acts as a sensor of phosphatidylserine (PS) flipping at the plasma membrane and governs morphogenesis of muscle cells. In myoblasts, flippase-mediated PS enrichment at the inner leaflet of plasma membrane triggers channel activation and Ca(2+) influx followed by Rho GTPases signal transduction, leading to assembly of cortical actomyosin fibers and myotube formation. The polypeptide is Piezo-type mechanosensitive ion channel component 1 (Piezo1) (Rattus norvegicus (Rat)).